The sequence spans 444 residues: Protein kinase C and casein kinase substrate in neurons protein 1 (444 aa).

Residues Ser-2 and Ser-79 each carry the phosphoserine modification. An F-BAR domain is found at 13-283 (EETTDSFWEV…AIRGADAQDD (271 aa)). The stretch at 26-275 (KRTVKRIDDG…QVYRELEQAI (250 aa)) forms a coiled coil. Thr-184 is modified (phosphothreonine). The segment at 313 to 384 (AAKKEKQPKK…NGGSNPFDED (72 aa)) is disordered. A compositionally biased stretch (basic and acidic residues) spans 314 to 324 (AKKEKQPKKAE). Residues 336–358 (ESTSQAGDRGSVSSYDRGQTYAT) show a composition bias toward polar residues. Phosphoserine occurs at positions 346, 348, 349, 361, and 365. Residues 385–444 (AKGVRVRALYDYDGQEQDELSFKAGDELTKLGEEDEQGWCRGRLDSGQLGLYPANYVEVV) enclose the SH3 domain. A Phosphotyrosine modification is found at Tyr-394. 2 positions are modified to phosphoserine: Ser-405 and Ser-430.

It belongs to the PACSIN family. As to quaternary structure, homodimer. May form heterooligomers with other PACSINs. Interacts with MAPT. Interacts (via SH3 domain) with SYNJ1 and WASL. Interacts (via SH3 domain) with DNM1; the interaction is reduced by DNM1 phosphorylation. Interacts with DNM2 and DNM3. Interacts with both COBL and DBNL. Identified in a complex composed of COBL, PACSIN1 and WASL. Interacts with EHD1 and EHD3. Interacts with TRPV4. Post-translationally, phosphorylated by casein kinase 2 (CK2) and protein kinase C (PKC).

Its subcellular location is the cytoplasm. The protein localises to the cell projection. It localises to the synapse. The protein resides in the synaptosome. It is found in the ruffle membrane. Its subcellular location is the membrane. The protein localises to the cytoplasmic vesicle membrane. It localises to the cytosol. The protein resides in the cell membrane. Its function is as follows. Binds to membranes via its F-BAR domain and mediates membrane tubulation. Plays a role in the reorganization of the microtubule cytoskeleton via its interaction with MAPT; this decreases microtubule stability and inhibits MAPT-induced microtubule polymerization. Plays a role in cellular transport processes by recruiting DNM1, DNM2 and DNM3 to membranes. Plays a role in the reorganization of the actin cytoskeleton and in neuron morphogenesis via its interaction with COBL and WASL, and by recruiting COBL to the cell cortex. Plays a role in the regulation of neurite formation, neurite branching and the regulation of neurite length. Required for normal synaptic vesicle endocytosis; this process retrieves previously released neurotransmitters to accommodate multiple cycles of neurotransmission. Required for normal excitatory and inhibitory synaptic transmission. The polypeptide is Protein kinase C and casein kinase substrate in neurons protein 1 (PACSIN1) (Bos taurus (Bovine)).